Consider the following 296-residue polypeptide: Protoheme IX farnesyltransferase (296 aa).

The next 9 helical transmembrane spans lie at 11–31, 35–55, 84–104, 107–127, 132–152, 162–182, 208–228, 229–249, and 264–284; these read PGII…AAQG, YPLF…GCVF, VTLV…YVAA, LAMW…SLYM, VYGT…GYCA, LILL…IAIF, ITLY…GGYA, GYKY…MALS, and LFVF…VDSM.

Belongs to the UbiA prenyltransferase family. Protoheme IX farnesyltransferase subfamily.

The protein localises to the cell inner membrane. It catalyses the reaction heme b + (2E,6E)-farnesyl diphosphate + H2O = Fe(II)-heme o + diphosphate. It functions in the pathway porphyrin-containing compound metabolism; heme O biosynthesis; heme O from protoheme: step 1/1. In terms of biological role, converts heme B (protoheme IX) to heme O by substitution of the vinyl group on carbon 2 of heme B porphyrin ring with a hydroxyethyl farnesyl side group. The polypeptide is Protoheme IX farnesyltransferase (Pectobacterium atrosepticum (strain SCRI 1043 / ATCC BAA-672) (Erwinia carotovora subsp. atroseptica)).